Here is a 266-residue protein sequence, read N- to C-terminus: Phosphatidylglycerol--prolipoprotein diacylglyceryl transferase (266 aa).

7 consecutive transmembrane segments (helical) span residues 10-30 (VALA…LIGI), 56-76 (LVFW…VLFY), 92-112 (WKGG…VWWF), 120-140 (FFQL…AGRI), 171-191 (PSQL…LWLF), 199-219 (ASVS…VEFV), and 233-253 (WLTM…ALMV). Arg139 is an a 1,2-diacyl-sn-glycero-3-phospho-(1'-sn-glycerol) binding site.

It belongs to the Lgt family.

Its subcellular location is the cell inner membrane. It catalyses the reaction L-cysteinyl-[prolipoprotein] + a 1,2-diacyl-sn-glycero-3-phospho-(1'-sn-glycerol) = an S-1,2-diacyl-sn-glyceryl-L-cysteinyl-[prolipoprotein] + sn-glycerol 1-phosphate + H(+). It functions in the pathway protein modification; lipoprotein biosynthesis (diacylglyceryl transfer). In terms of biological role, catalyzes the transfer of the diacylglyceryl group from phosphatidylglycerol to the sulfhydryl group of the N-terminal cysteine of a prolipoprotein, the first step in the formation of mature lipoproteins. The chain is Phosphatidylglycerol--prolipoprotein diacylglyceryl transferase from Pseudomonas aeruginosa (strain LESB58).